We begin with the raw amino-acid sequence, 254 residues long: Large ribosomal subunit protein uL2 (254 aa).

Belongs to the universal ribosomal protein uL2 family. In terms of assembly, component of the large ribosomal subunit. Mature ribosomes consist of a small (40S) and a large (60S) subunit. The 40S subunit contains about 32 different proteins and 1 molecule of RNA (18S). The 60S subunit contains 45 different proteins and 3 molecules of RNA (25S, 5.8S and 5S).

It is found in the cytoplasm. In terms of biological role, component of the ribosome, a large ribonucleoprotein complex responsible for the synthesis of proteins in the cell. The small ribosomal subunit (SSU) binds messenger RNAs (mRNAs) and translates the encoded message by selecting cognate aminoacyl-transfer RNA (tRNA) molecules. The large subunit (LSU) contains the ribosomal catalytic site termed the peptidyl transferase center (PTC), which catalyzes the formation of peptide bonds, thereby polymerizing the amino acids delivered by tRNAs into a polypeptide chain. The nascent polypeptides leave the ribosome through a tunnel in the LSU and interact with protein factors that function in enzymatic processing, targeting, and the membrane insertion of nascent chains at the exit of the ribosomal tunnel. The protein is Large ribosomal subunit protein uL2 of Candida albicans (strain SC5314 / ATCC MYA-2876) (Yeast).